We begin with the raw amino-acid sequence, 37 residues long: Cytochrome b6-f complex subunit 5 (37 aa).

A helical membrane pass occupies residues 5–25 (LLSGIVLGLIPITLLGLFVTA).

This sequence belongs to the PetG family. In terms of assembly, the 4 large subunits of the cytochrome b6-f complex are cytochrome b6, subunit IV (17 kDa polypeptide, PetD), cytochrome f and the Rieske protein, while the 4 small subunits are PetG, PetL, PetM and PetN. The complex functions as a dimer.

It localises to the plastid. The protein localises to the chloroplast thylakoid membrane. Its function is as follows. Component of the cytochrome b6-f complex, which mediates electron transfer between photosystem II (PSII) and photosystem I (PSI), cyclic electron flow around PSI, and state transitions. PetG is required for either the stability or assembly of the cytochrome b6-f complex. The sequence is that of Cytochrome b6-f complex subunit 5 from Marchantia polymorpha (Common liverwort).